Reading from the N-terminus, the 611-residue chain is Chaperone protein DnaK (611 aa).

The residue at position 173 (T173) is a Phosphothreonine; by autocatalysis. The segment covering 577-591 (AAAAQAAQGGEADAG) has biased composition (low complexity). The segment at 577–611 (AAAAQAAQGGEADAGAGKKDDGVVDADFEEVKDDK) is disordered. Residues 599–611 (VVDADFEEVKDDK) show a composition bias toward acidic residues.

The protein belongs to the heat shock protein 70 family.

Its function is as follows. Acts as a chaperone. The sequence is that of Chaperone protein DnaK from Lysinibacillus sphaericus (strain C3-41).